A 295-amino-acid chain; its full sequence is Delta-1-pyrroline-5-carboxylate reductase apf3 (295 aa).

This sequence belongs to the pyrroline-5-carboxylate reductase family.

It participates in secondary metabolite biosynthesis. In terms of biological role, delta-1-pyrroline-5-carboxylate reductase; part of the gene cluster that mediates the biosynthesis of the cyclic tetrapeptide apicidin F (APF). The non-ribosomal peptide synthetase apf1 incorporates four different amino acids to produce apicidin F: L-phenylalanine, D-pipecolic acid (D-pip), N-methoxy-L-tryptophan and L-2-aminooctanedioic acid. L-Phenylalanine is the only proteinogenic amino acid directly used by apf1. The 3 other apf1 substrates are non-proteinogenic and have to be modified by other enzymes of the cluster. Lysine is converted to delta-1-pyrroline-5-carboxylate (P5C) which is reduced to L-pipecolic acid (L-pip) by apf3. L-pip is epimerized to D-pip, probably by apf1 activity, prior to incorporation. L-Tryptophan is N-oxidyzed by one of the cytochrome P450 monooxygenases (apf7 or apf8), and further methylated at the hydroxy group by the O-methyltransferase apf6 to yield N-methoxy-L-tryptophan. The synthesis of the fourth apf1 substrate is more complex. The fatty acid synthase apf5 is involved in the synthesis of the octanoic acid backbone of L-2-aminooctanedioic acid by fixing one acetyl-CoA unit and three malonyl-CoA units. Then one of the cytochrome P450 monooxygenases (apf7 or apf8) may oxidize this backbone to 2-oxooctanoic acid. The aminotransferase apf4 is predicted to catalyze the exchange of the keto group with an amino group. The next step would be the oxidation of 2-aminooctanoic acid by one of the cytochrome P450 monooxygenases (apf7 or apf8). The last step is the oxidation of 2-amino-8-hydroxyoctanoic acid to 2-aminooctanedioic acid is catalyzed by the FAD-dependent monooxygenase apf9. The protein is Delta-1-pyrroline-5-carboxylate reductase apf3 of Gibberella fujikuroi (strain CBS 195.34 / IMI 58289 / NRRL A-6831) (Bakanae and foot rot disease fungus).